The following is a 216-amino-acid chain: Peptide methionine sulfoxide reductase MsrA (216 aa).

C54 is an active-site residue.

Belongs to the MsrA Met sulfoxide reductase family.

The catalysed reaction is L-methionyl-[protein] + [thioredoxin]-disulfide + H2O = L-methionyl-(S)-S-oxide-[protein] + [thioredoxin]-dithiol. It carries out the reaction [thioredoxin]-disulfide + L-methionine + H2O = L-methionine (S)-S-oxide + [thioredoxin]-dithiol. Functionally, has an important function as a repair enzyme for proteins that have been inactivated by oxidation. Catalyzes the reversible oxidation-reduction of methionine sulfoxide in proteins to methionine. This is Peptide methionine sulfoxide reductase MsrA from Xylella fastidiosa (strain M12).